The chain runs to 199 residues: MGNMDGKAVEELSATECHQWYKKFMTECPSGQLTLYEFKQFFGLKNLSPSANKYVEQMFETFDFNKDGYIDFMEYVAALSLVLKGKVDQKLRWYFKLYDVDGNGCIDRGELLNIIKAIRAINRCNEAMTAEEFTNMVFDKIDINGDGELSLEEFMEGVQKDEVLLDILTRSLDLTHIVKLIQNDGKNPHAPEEAEEAAQ.

Gly-2 is lipidated: N-myristoyl glycine. Asn-3 carries the post-translational modification Deamidated asparagine. 4 EF-hand domains span residues Ser-13–Ser-48, Ser-50–Gly-85, Lys-86–Ile-121, and Thr-129–Leu-164. Residues Asp-63, Asn-65, Asp-67, Tyr-69, Glu-74, Asp-99, Asp-101, Asn-103, Cys-105, Glu-110, Asp-142, Asn-144, Asp-146, Glu-148, and Glu-153 each contribute to the Ca(2+) site.

As to expression, retina, in rod and cone outer segments, and pineal gland.

In terms of biological role, stimulates retinal guanylyl cyclase when free calcium ions concentration is low and inhibits guanylyl cyclase when free calcium ions concentration is elevated. This Ca(2+)-sensitive regulation of retinal guanylyl cyclase is a key event in recovery of the dark state of rod photoreceptors following light exposure. In Gallus gallus (Chicken), this protein is Guanylyl cyclase-activating protein 1 (GUCA1A).